The primary structure comprises 578 residues: Probable arginine--tRNA ligase, mitochondrial (578 aa).

The transit peptide at 1–16 directs the protein to the mitochondrion; sequence MACGFRRAIACQLSRV. L-arginine is bound by residues 133–135, His144, Tyr322, Asp326, and Gln350; that span reads SPN. The short motif at 133–144 is the 'HIGH' region element; the sequence is SPNVAKKFHVGH. The residue at position 568 (Lys568) is an N6-acetyllysine.

This sequence belongs to the class-I aminoacyl-tRNA synthetase family.

Its subcellular location is the mitochondrion membrane. It carries out the reaction tRNA(Arg) + L-arginine + ATP = L-arginyl-tRNA(Arg) + AMP + diphosphate. In terms of biological role, catalyzes the attachment of arginine to tRNA(Arg) in a two-step reaction: arginine is first activated by ATP to form Arg-AMP and then transferred to the acceptor end of tRNA(Arg). The chain is Probable arginine--tRNA ligase, mitochondrial (RARS2) from Homo sapiens (Human).